The chain runs to 302 residues: Snake venom metalloprotease inhibitor 02A10 (302 aa).

Residues 1-23 (MSVSRLAASGLLLVSLLALALDG) form the signal peptide. The propeptide occupies 24–47 (KPVEKWSPWLWPPRPRPPIPPLQQ). The segment at 32 to 302 (WLWPPRPRPP…CPKLPPSGGH (271 aa)) is disordered. Positions 33–44 (LWPPRPRPPIPP) are enriched in pro residues. Pyrrolidone carboxylic acid is present on Gln-48. A propeptide spanning residues 51-58 (LDPPIPQQ) is cleaved from the precursor. Gln-59 bears the Pyrrolidone carboxylic acid mark. Positions 62-69 (LDPPIPQQ) are excised as a propeptide. Residue Gln-70 is modified to Pyrrolidone carboxylic acid. Residues 73-80 (LDPPIPQQ) constitute a propeptide that is removed on maturation. The residue at position 81 (Gln-81) is a Pyrrolidone carboxylic acid. A propeptide spanning residues 84–91 (LNPPIPQQ) is cleaved from the precursor. Pyrrolidone carboxylic acid is present on Gln-92. The propeptide occupies 95–102 (LDPPIPQQ). A Pyrrolidone carboxylic acid modification is found at Gln-103. Residues 106–113 (LNPPIPQQ) constitute a propeptide that is removed on maturation. Gln-114 is modified (pyrrolidone carboxylic acid). Positions 117-124 (LNPPIPQQ) are excised as a propeptide. Gln-125 bears the Pyrrolidone carboxylic acid mark. The propeptide occupies 128-135 (LNPPIPQQ). Gln-136 is subject to Pyrrolidone carboxylic acid. The propeptide occupies 139–146 (LNPPIPQQ). Gln-147 carries the pyrrolidone carboxylic acid modification. Positions 150-157 (LDPPIPQQ) are excised as a propeptide. Pyrrolidone carboxylic acid is present on Gln-158. Positions 161-168 (LDPPIPQQ) are excised as a propeptide. At Gln-169 the chain carries Pyrrolidone carboxylic acid. A propeptide spanning residues 172–179 (LDPPIPQQ) is cleaved from the precursor. At Gln-180 the chain carries Pyrrolidone carboxylic acid. The propeptide occupies 183–190 (LNPPIPQQ). Gln-191 is modified (pyrrolidone carboxylic acid). A propeptide spanning residues 194–201 (LDPPIPQQ) is cleaved from the precursor. Pyrrolidone carboxylic acid is present on Gln-202. A propeptide spanning residues 205–212 (LDPPIPQQ) is cleaved from the precursor. Gln-213 carries the post-translational modification Pyrrolidone carboxylic acid. Positions 216 to 223 (LNPPIPQQ) are excised as a propeptide. Gln-224 is modified (pyrrolidone carboxylic acid). Positions 227–273 (QRPLQPEVPSLMELHQERQKQGRMMHHDEDPGDAAEGPRRQKKEPGK) are excised as a propeptide. 2 stretches are compositionally biased toward basic and acidic residues: residues 240 to 255 (LHQE…HHDE) and 262 to 273 (EGPRRQKKEPGK). The cysteines at positions 279 and 293 are disulfide-linked. A propeptide spanning residues 294 to 302 (PKLPPSGGH) is cleaved from the precursor.

It in the C-terminal section; belongs to the natriuretic peptide family. Expressed by the venom gland.

It localises to the secreted. Functionally, pEKW peptides may serve as metalloproteinase inhibitors during glandular storage. Their inhibition may be instantly disengaged, by dilution or physiochemical change, when venom is injected into tissue of the victim. Exhibits hypotensive and vasodepressor activity. Acts by activating natriuretic receptors (NPR1 and/or NPR2 and/or NPR3). The protein is Snake venom metalloprotease inhibitor 02A10 (Svmpi-Cce12) of Cerastes cerastes (Horned desert viper).